The chain runs to 92 residues: UPF0250 protein PD_0532 (92 aa).

It belongs to the UPF0250 family.

This chain is UPF0250 protein PD_0532, found in Xylella fastidiosa (strain Temecula1 / ATCC 700964).